The sequence spans 316 residues: Olfactory receptor 1165 (316 aa).

The Extracellular segment spans residues 1–28 (MMLDLGNESSVTMFILSGFSEYPHLHAP). An N-linked (GlcNAc...) asparagine glycan is attached at asparagine 7. Residues 29 to 50 (LFLLFFMIYTVTLIGNLGIIVV) traverse the membrane as a helical segment. Over 51 to 61 (RKVNPKLHTPM) the chain is Cytoplasmic. Residues 62–80 (YFFLSHLSFLDICYSSVFT) traverse the membrane as a helical segment. Topologically, residues 81-99 (PKLLEILIVEDRTISFKGC) are extracellular. A disulfide bridge connects residues cysteine 99 and cysteine 181. Residues 100-122 (MTQFFLICAFVITEMFMLAVMAY) traverse the membrane as a helical segment. Over 123 to 141 (DRFVAVCNPLLYTVSMSPK) the chain is Cytoplasmic. The helical transmembrane segment at 142–166 (LCAFLVAGTYMWGVLCSLTITYSLL) threads the bilayer. Residues 167–205 (QLSYCGPNIINHFGCEYSAILSLSCSDPTFSQVVCLTIS) are Extracellular-facing. Residues 206 to 228 (IFNETCSLLIILASYVFIVVTII) traverse the membrane as a helical segment. Over 229 to 239 (KMPSKGGLQKA) the chain is Cytoplasmic. A helical membrane pass occupies residues 240–263 (FSTCSSHLTAISIFHGIILLLYCV). Over 264 to 268 (PNSKN) the chain is Extracellular. Residues 269 to 291 (SWLVVKVATVLFTVMIPMLNPLI) form a helical membrane-spanning segment. Topologically, residues 292–316 (YSLRNKDVKGTVSRLMHLKLQAHST) are cytoplasmic.

Belongs to the G-protein coupled receptor 1 family.

It localises to the cell membrane. Olfactory receptor. The protein is Olfactory receptor 1165 of Mus musculus (Mouse).